Consider the following 365-residue polypeptide: Chorismate synthase (365 aa).

Residue R46 participates in NADP(+) binding. Residues R123–S125, N241–G242, G281, K296–S300, and R322 each bind FMN.

It belongs to the chorismate synthase family. In terms of assembly, homotetramer. FMNH2 serves as cofactor.

It carries out the reaction 5-O-(1-carboxyvinyl)-3-phosphoshikimate = chorismate + phosphate. The protein operates within metabolic intermediate biosynthesis; chorismate biosynthesis; chorismate from D-erythrose 4-phosphate and phosphoenolpyruvate: step 7/7. In terms of biological role, catalyzes the anti-1,4-elimination of the C-3 phosphate and the C-6 proR hydrogen from 5-enolpyruvylshikimate-3-phosphate (EPSP) to yield chorismate, which is the branch point compound that serves as the starting substrate for the three terminal pathways of aromatic amino acid biosynthesis. This reaction introduces a second double bond into the aromatic ring system. The polypeptide is Chorismate synthase (Helicobacter pylori (strain G27)).